The primary structure comprises 767 residues: DNA topoisomerase 1 (767 aa).

A compositionally biased stretch (basic and acidic residues) spans 1–23; that stretch reads MSGDHLHNDSQIEADFRLNDSHK. Residues 1-201 are disordered; sequence MSGDHLHNDS…NKKKKPKKEE (201 aa). Ser-2 bears the N-acetylserine mark. A phosphoserine mark is found at Ser-2 and Ser-10. A compositionally biased stretch (basic residues) spans 24 to 39; that stretch reads HKDKHKDREHRHKEHK. Residues 40–110 show a composition bias toward basic and acidic residues; the sequence is KDKEKDREKS…DAKIKKEKEN (71 aa). Ser-59 is subject to Phosphoserine. Residue Lys-103 forms a Glycyl lysine isopeptide (Lys-Gly) (interchain with G-Cter in SUMO2) linkage. Lys-105 participates in a covalent cross-link: Glycyl lysine isopeptide (Lys-Gly) (interchain with G-Cter in SUMO); alternate. Lys-105 is covalently cross-linked (Glycyl lysine isopeptide (Lys-Gly) (interchain with G-Cter in SUMO2); alternate). Ser-114 carries the phosphoserine modification. Residue Lys-119 forms a Glycyl lysine isopeptide (Lys-Gly) (interchain with G-Cter in SUMO); alternate linkage. A Glycyl lysine isopeptide (Lys-Gly) (interchain with G-Cter in SUMO2); alternate cross-link involves residue Lys-119. Lys-119 is covalently cross-linked (Glycyl lysine isopeptide (Lys-Gly) (interchain with G-Cter in SUMO1); alternate). Basic and acidic residues predominate over residues 131–168; the sequence is PKEDIKPLKRPRDEDDADYKPKKIKTEDIKKEKKRKLE. Residues Lys-136 and Lys-150 each participate in a glycyl lysine isopeptide (Lys-Gly) (interchain with G-Cter in SUMO2) cross-link. Residue Lys-155 forms a Glycyl lysine isopeptide (Lys-Gly) (interchain with G-Cter in SUMO); alternate linkage. Residue Lys-155 forms a Glycyl lysine isopeptide (Lys-Gly) (interchain with G-Cter in SUMO2); alternate linkage. Residues Lys-160 and Lys-166 each participate in a glycyl lysine isopeptide (Lys-Gly) (interchain with G-Cter in SUMO2) cross-link. Residue Lys-174 forms a Glycyl lysine isopeptide (Lys-Gly) (interchain with G-Cter in SUMO2); alternate linkage. Lys-174 is modified (N6-acetyllysine; alternate). A compositionally biased stretch (basic and acidic residues) spans 181-201; the sequence is KDKDKKGAESDNKKKKPKKEE. Lys-206 participates in a covalent cross-link: Glycyl lysine isopeptide (Lys-Gly) (interchain with G-Cter in SUMO2). Lys-282 bears the N6-acetyllysine mark. Residue Lys-338 forms a Glycyl lysine isopeptide (Lys-Gly) (interchain with G-Cter in SUMO2) linkage. Interaction with DNA regions lie at residues 427–428 and 490–495; these read KY and RAGNEK. The Topo IB-type catalytic domain maps to 434–767; it reads SSRIKGEKDW…IDMTDEDYEF (334 aa). A Phosphoserine; by CK2 modification is found at Ser-508. A Glycyl lysine isopeptide (Lys-Gly) (interchain with G-Cter in SUMO2) cross-link involves residue Lys-551. Positions 587 to 589 are interaction with DNA; it reads TAK. Residues Lys-644, Lys-702, and Lys-714 each participate in a glycyl lysine isopeptide (Lys-Gly) (interchain with G-Cter in SUMO2) cross-link. Tyr-725 acts as the O-(3'-phospho-DNA)-tyrosine intermediate in catalysis.

It belongs to the type IB topoisomerase family. Monomer. Interacts with ERCC6. Interacts with TPRN; TPRN interacts with a number of DNA damage response proteins, is recruited to sites of DNA damage and may play a role in DNA damage repair. Sumoylated. Lys-119 is the main site of sumoylation. Sumoylation plays a role in partitioning TOP1 between nucleoli and nucleoplasm. Levels are dramatically increased on camptothecin (CPT) treatment. Post-translationally, phosphorylation at Ser-508 by CK2 increases binding to supercoiled DNA and sensitivity to camptothecin.

Its subcellular location is the nucleus. The protein resides in the nucleolus. It localises to the nucleoplasm. The catalysed reaction is ATP-independent breakage of single-stranded DNA, followed by passage and rejoining.. Its activity is regulated as follows. Specifically inhibited by camptothecin (CPT), a plant alkaloid with antitumor activity. In terms of biological role, releases the supercoiling and torsional tension of DNA introduced during the DNA replication and transcription by transiently cleaving and rejoining one strand of the DNA duplex. Introduces a single-strand break via transesterification at a target site in duplex DNA. The scissile phosphodiester is attacked by the catalytic tyrosine of the enzyme, resulting in the formation of a DNA-(3'-phosphotyrosyl)-enzyme intermediate and the expulsion of a 5'-OH DNA strand. The free DNA strand then rotates around the intact phosphodiester bond on the opposing strand, thus removing DNA supercoils. Finally, in the religation step, the DNA 5'-OH attacks the covalent intermediate to expel the active-site tyrosine and restore the DNA phosphodiester backbone. Regulates the alternative splicing of tissue factor (F3) pre-mRNA in endothelial cells. Involved in the circadian transcription of the core circadian clock component BMAL1 by altering the chromatin structure around the ROR response elements (ROREs) on the BMAL1 promoter. This chain is DNA topoisomerase 1 (TOP1), found in Cricetulus griseus (Chinese hamster).